A 96-amino-acid chain; its full sequence is Co-chaperonin GroES (96 aa).

The protein belongs to the GroES chaperonin family. Heptamer of 7 subunits arranged in a ring. Interacts with the chaperonin GroEL.

Its subcellular location is the cytoplasm. Its function is as follows. Together with the chaperonin GroEL, plays an essential role in assisting protein folding. The GroEL-GroES system forms a nano-cage that allows encapsulation of the non-native substrate proteins and provides a physical environment optimized to promote and accelerate protein folding. GroES binds to the apical surface of the GroEL ring, thereby capping the opening of the GroEL channel. The chain is Co-chaperonin GroES from Thioalkalivibrio sulfidiphilus (strain HL-EbGR7).